The chain runs to 401 residues: Carbamoyl phosphate synthase small chain (401 aa).

The tract at residues 1–203 is CPSase; the sequence is MTETAPWTTR…KGYGTLGEAD (203 aa). S56, G255, and G257 together coordinate L-glutamine. Residues 207–395 enclose the Glutamine amidotransferase type-1 domain; that stretch reads HVVCVDFGVK…VNLLRENKGE (189 aa). C284 functions as the Nucleophile in the catalytic mechanism. Residues L285, Q288, N326, G328, and F329 each contribute to the L-glutamine site. Catalysis depends on residues H368 and E370.

This sequence belongs to the CarA family. As to quaternary structure, composed of two chains; the small (or glutamine) chain promotes the hydrolysis of glutamine to ammonia, which is used by the large (or ammonia) chain to synthesize carbamoyl phosphate. Tetramer of heterodimers (alpha,beta)4.

It catalyses the reaction hydrogencarbonate + L-glutamine + 2 ATP + H2O = carbamoyl phosphate + L-glutamate + 2 ADP + phosphate + 2 H(+). The catalysed reaction is L-glutamine + H2O = L-glutamate + NH4(+). The protein operates within amino-acid biosynthesis; L-arginine biosynthesis; carbamoyl phosphate from bicarbonate: step 1/1. It functions in the pathway pyrimidine metabolism; UMP biosynthesis via de novo pathway; (S)-dihydroorotate from bicarbonate: step 1/3. Functionally, small subunit of the glutamine-dependent carbamoyl phosphate synthetase (CPSase). CPSase catalyzes the formation of carbamoyl phosphate from the ammonia moiety of glutamine, carbonate, and phosphate donated by ATP, constituting the first step of 2 biosynthetic pathways, one leading to arginine and/or urea and the other to pyrimidine nucleotides. The small subunit (glutamine amidotransferase) binds and cleaves glutamine to supply the large subunit with the substrate ammonia. The polypeptide is Carbamoyl phosphate synthase small chain (Agrobacterium fabrum (strain C58 / ATCC 33970) (Agrobacterium tumefaciens (strain C58))).